A 213-amino-acid polypeptide reads, in one-letter code: Nickel-cobalt-cadmium resistance protein NccN (213 aa).

A run of 4 helical transmembrane segments spans residues 24 to 44 (IGIW…GHSQ), 48 to 68 (TWIS…ATVG), 113 to 133 (ESIT…PAVI), and 180 to 200 (NLAD…VELA).

This sequence to A.eutrophus CzcN.

The protein localises to the cell inner membrane. Functionally, component of the NCC cation-efflux system that confers resistance to nickel, cobalt and cadmium. Appears to be involved in metal specificity but affects only nickel resistance. May be involved in nickel transport. This chain is Nickel-cobalt-cadmium resistance protein NccN (nccN), found in Alcaligenes xylosoxydans xylosoxydans (Achromobacter xylosoxidans).